The sequence spans 254 residues: Segregation and condensation protein A (254 aa).

This sequence belongs to the ScpA family. In terms of assembly, component of a cohesin-like complex composed of ScpA, ScpB and the Smc homodimer, in which ScpA and ScpB bind to the head domain of Smc. The presence of the three proteins is required for the association of the complex with DNA.

The protein localises to the cytoplasm. Participates in chromosomal partition during cell division. May act via the formation of a condensin-like complex containing Smc and ScpB that pull DNA away from mid-cell into both cell halves. The protein is Segregation and condensation protein A of Clostridium tetani (strain Massachusetts / E88).